We begin with the raw amino-acid sequence, 279 residues long: NAD kinase (279 aa).

The active-site Proton acceptor is Asp-57. Residues 57–58 (DG), 133–134 (NE), Arg-159, Asp-161, and 172–177 (TAYNKS) each bind NAD(+).

This sequence belongs to the NAD kinase family. A divalent metal cation serves as cofactor.

It localises to the cytoplasm. It catalyses the reaction NAD(+) + ATP = ADP + NADP(+) + H(+). In terms of biological role, involved in the regulation of the intracellular balance of NAD and NADP, and is a key enzyme in the biosynthesis of NADP. Catalyzes specifically the phosphorylation on 2'-hydroxyl of the adenosine moiety of NAD to yield NADP. The protein is NAD kinase of Streptococcus pyogenes serotype M2 (strain MGAS10270).